The chain runs to 288 residues: MKKIKKAIIPAAGLGTRFLPATKAMPKEMLPILDKPTIQYIVEEAARAGIEDIIIVTGRHKRAIEDHFDSQKELEMVLKEKGKSELLEKVQYSTELANIFYVRQKEQKGLGHAISSARQFIGNEPFVVLLGDDIVESEVPAVKQLIDVYEETGHSVIGVQEVPEADTHRYGIIDPLTKNGRQYEVKKFVEKPAQGTAPSNLAIMGRYVLTPEIFDYLKTQKEGAGNEIQLTDAIERMNNDNQVYAYDFEGERYDVGEKLGFVKTTIEYALKDDSMREELTRFIKELGL.

This sequence belongs to the UDPGP type 2 family.

It catalyses the reaction alpha-D-glucose 1-phosphate + UTP + H(+) = UDP-alpha-D-glucose + diphosphate. It participates in glycolipid metabolism; diglucosyl-diacylglycerol biosynthesis. Its function is as follows. Catalyzes the formation of UDP-glucose from glucose-1-phosphate and UTP. This is an intermediate step in the biosynthesis of diglucosyl-diacylglycerol (Glc2-DAG), i.e. the predominant glycolipid found in the S.aureus membrane, which is also used as a membrane anchor for lipoteichoic acid (LTA). This chain is UTP--glucose-1-phosphate uridylyltransferase (gtaB), found in Staphylococcus aureus (strain bovine RF122 / ET3-1).